A 113-amino-acid polypeptide reads, in one-letter code: U11-theraphotoxin-Hhn1a (113 aa).

A signal peptide spans 1 to 21 (MNTVRVTFLLVFVLAVSLGQT). The propeptide occupies 22–74 (DKDENRMEMQEKTEQGKSYLDFAENLLLQKLEELEAKLLEEDSEESRNSRQKR). 3 disulfide bridges follow: C75–C90, C82–C95, and C89–C110.

The protein belongs to the neurotoxin 14 (magi-1) family. 01 (HNTX-16) subfamily. In terms of tissue distribution, expressed by the venom gland.

Its subcellular location is the secreted. In terms of biological role, probable ion channel inhibitor. The protein is U11-theraphotoxin-Hhn1a of Cyriopagopus hainanus (Chinese bird spider).